Here is a 92-residue protein sequence, read N- to C-terminus: Small ribosomal subunit protein uS19c (92 aa).

This sequence belongs to the universal ribosomal protein uS19 family.

The protein localises to the plastid. Its subcellular location is the chloroplast. In terms of biological role, protein S19 forms a complex with S13 that binds strongly to the 16S ribosomal RNA. The sequence is that of Small ribosomal subunit protein uS19c from Phaeodactylum tricornutum (strain CCAP 1055/1).